The chain runs to 553 residues: MVQRLWVSRLLRHRKAQLLLVNLLTFGLEVCLAAGITYVPPLLLEVGVEEKFMTMVLGIGPVLGLVCVPLLGSASDHWRGRYGRRRPFIWALSLGILLSLFLIPRAGWLAGLLCPDPRPLELALLILGVGLLDFCGQVCFTPLEALLSDLFRDPDHCRQAYSVYAFMISLGGCLGYLLPAIDWDTSALAPYLGTQEECLFGLLTLIFLTCVAATLLVAEEAALGPTEPAEGLSAPSLSPHCCPCRARLAFRNLGALLPRLHQLCCRMPRTLRRLFVAELCSWMALMTFTLFYTDFVGEGLYQGVPRAEPGTEARRHYDEGVRMGSLGLFLQCAISLVFSLVMDRLVQRFGTRAVYLASVAAFPVAAGATCLSHSVAVVTASAALTGFTFSALQILPYTLASLYHREKQVFLPKYRGDTGGASSEDSLMTSFLPGPKPGAPFPNGHVGAGGSGLLPPPPALCGASACDVSVRVVVGEPTEARVVPGRGICLDLAILDSAFLLSQVAPSLFMGSIVQLSQSVTAYMVSAAGLGLVAIYFATQVVFDKSDLAKYSA.

A run of 11 helical transmembrane segments spans residues 19 to 39 (LLVNLLTFGLEVCLAAGITYV), 52 to 72 (FMTMVLGIGPVLGLVCVPLLG), 88 to 108 (FIWALSLGILLSLFLIPRAGW), 120 to 140 (LELALLILGVGLLDFCGQVCF), 161 to 181 (YSVYAFMISLGGCLGYLLPAI), 198 to 218 (CLFGLLTLIFLTCVAATLLVA), 275 to 295 (FVAELCSWMALMTFTLFYTDF), 323 to 343 (MGSLGLFLQCAISLVFSLVMD), 353 to 373 (AVYLASVAAFPVAAGATCLSH), 382 to 402 (AALTGFTFSALQILPYTLASL), and 522 to 542 (AYMVSAAGLGLVAIYFATQVV).

It belongs to the glycoside-pentoside-hexuronide (GPH) cation symporter transporter (TC 2.A.2) family. As to expression, prostate specific. Expressed in all prostatic glandular cells. Expressed both in normal and cancerous prostates.

The protein localises to the membrane. It carries out the reaction sucrose(out) + H(+)(out) = sucrose(in) + H(+)(in). Functionally, proton-associated sucrose transporter. May be able to transport also glucose and fructose. This Homo sapiens (Human) protein is Solute carrier family 45 member 3.